The following is a 517-amino-acid chain: Crotonobetaine/carnitine--CoA ligase (517 aa).

It belongs to the ATP-dependent AMP-binding enzyme family.

It catalyses the reaction 4-(trimethylamino)butanoate + ATP + CoA = 4-(trimethylamino)butanoyl-CoA + AMP + diphosphate. It carries out the reaction crotonobetaine + ATP + CoA = crotonobetainyl-CoA + AMP + diphosphate. The catalysed reaction is (R)-carnitine + ATP + CoA = (R)-carnitinyl-CoA + AMP + diphosphate. Its pathway is amine and polyamine metabolism; carnitine metabolism. Its function is as follows. Catalyzes the transfer of CoA to carnitine, generating the initial carnitinyl-CoA needed for the CaiB reaction cycle. Also has activity toward crotonobetaine and gamma-butyrobetaine. This chain is Crotonobetaine/carnitine--CoA ligase, found in Salmonella agona (strain SL483).